Consider the following 150-residue polypeptide: FAD synthase (150 aa).

ATP is bound by residues 11 to 12 (TF), 16 to 19 (HPGH), Asp96, and Tyr124.

Belongs to the archaeal FAD synthase family. In terms of assembly, homodimer. Requires a divalent metal cation as cofactor.

It carries out the reaction FMN + ATP + H(+) = FAD + diphosphate. The protein operates within cofactor biosynthesis; FAD biosynthesis; FAD from FMN: step 1/1. In terms of biological role, catalyzes the transfer of the AMP portion of ATP to flavin mononucleotide (FMN) to produce flavin adenine dinucleotide (FAD) coenzyme. The sequence is that of FAD synthase from Methanocaldococcus fervens (strain DSM 4213 / JCM 15782 / AG86) (Methanococcus fervens).